Here is a 259-residue protein sequence, read N- to C-terminus: Dihydroorotate dehydrogenase B (NAD(+)), electron transfer subunit (259 aa).

An FAD-binding FR-type domain is found at 3 to 103 (KKQGRLTIVK…LGPLGQGFPL (101 aa)). FAD is bound by residues 54–57 (RPIS), 71–73 (IYR), and 78–79 (GT). Cys222, Cys227, Cys230, and Cys246 together coordinate [2Fe-2S] cluster.

Belongs to the PyrK family. As to quaternary structure, heterotetramer of 2 PyrK and 2 PyrD type B subunits. [2Fe-2S] cluster serves as cofactor. FAD is required as a cofactor.

The protein operates within pyrimidine metabolism; UMP biosynthesis via de novo pathway; orotate from (S)-dihydroorotate (NAD(+) route): step 1/1. Its function is as follows. Responsible for channeling the electrons from the oxidation of dihydroorotate from the FMN redox center in the PyrD type B subunit to the ultimate electron acceptor NAD(+). This chain is Dihydroorotate dehydrogenase B (NAD(+)), electron transfer subunit, found in Shouchella clausii (strain KSM-K16) (Alkalihalobacillus clausii).